Consider the following 395-residue polypeptide: Ketol-acid reductoisomerase, mitochondrial (395 aa).

The transit peptide at 1-47 (MLRTQAARLICNSRVITAKRTFALATRAAAYSRPAARFVKPMITTRG) directs the protein to the mitochondrion. One can recognise a KARI N-terminal Rossmann domain in the interval 57–246 (VETVYERADW…AIGSGYVYQT (190 aa)). Residues 84–93 (GYGSQGYGQG), 108–113 (RKDGAS), and 146–150 (SDAAQ) contribute to the NADP(+) site. His-171 is an active-site residue. In terms of domain architecture, KARI C-terminal knotted spans 247–394 (TFEREVNSDL…KEVRKLRPEN (148 aa)). Mg(2+) contacts are provided by Asp-255, Glu-259, Glu-291, and Glu-295. Ser-317 contributes to the substrate binding site. Ser-355 is subject to Phosphoserine. The segment at 363–395 (DYREKLEKELDTIRNMEIWKVGKEVRKLRPENQ) is hydrophilic.

It belongs to the ketol-acid reductoisomerase family. Mg(2+) is required as a cofactor.

The protein resides in the mitochondrion. The catalysed reaction is (2R)-2,3-dihydroxy-3-methylbutanoate + NADP(+) = (2S)-2-acetolactate + NADPH + H(+). It carries out the reaction (2R,3R)-2,3-dihydroxy-3-methylpentanoate + NADP(+) = (S)-2-ethyl-2-hydroxy-3-oxobutanoate + NADPH + H(+). It functions in the pathway amino-acid biosynthesis; L-isoleucine biosynthesis; L-isoleucine from 2-oxobutanoate: step 2/4. The protein operates within amino-acid biosynthesis; L-valine biosynthesis; L-valine from pyruvate: step 2/4. In terms of biological role, involved in the biosynthesis of branched-chain amino acids (BCAA). Catalyzes the second common step in the parallel biosynthesis of isoleucine and valine. Converts alpha-aceto-alpha-hydroxybutyrate (AHB) to alpha,beta-dihydroxy-beta-methylvalerate (DHMV) and alpha-acetolactate (AL) to alpha,beta-dihydroxy-isovalerate (DHV) in isoleucine and valine biosynthesis, respectively. The polypeptide is Ketol-acid reductoisomerase, mitochondrial (Saccharomyces cerevisiae (strain ATCC 204508 / S288c) (Baker's yeast)).